Here is a 38-residue protein sequence, read N- to C-terminus: Antifungal protein 5 (38 aa).

This sequence belongs to the plant LTP family.

Functionally, possesses potent antifungal activity against F.graminearum but not P.infestans. The protein is Antifungal protein 5 of Malva parviflora (Little mallow).